The sequence spans 255 residues: Hydroxyacylglutathione hydrolase (255 aa).

The Zn(2+) site is built by H56, H58, D60, H61, H114, D133, and H171.

The protein belongs to the metallo-beta-lactamase superfamily. Glyoxalase II family. Monomer. Requires Zn(2+) as cofactor.

It carries out the reaction an S-(2-hydroxyacyl)glutathione + H2O = a 2-hydroxy carboxylate + glutathione + H(+). It functions in the pathway secondary metabolite metabolism; methylglyoxal degradation; (R)-lactate from methylglyoxal: step 2/2. In terms of biological role, thiolesterase that catalyzes the hydrolysis of S-D-lactoyl-glutathione to form glutathione and D-lactic acid. This Mesorhizobium japonicum (strain LMG 29417 / CECT 9101 / MAFF 303099) (Mesorhizobium loti (strain MAFF 303099)) protein is Hydroxyacylglutathione hydrolase.